We begin with the raw amino-acid sequence, 334 residues long: tRNA N6-adenosine threonylcarbamoyltransferase (334 aa).

Fe cation contacts are provided by His-111 and His-115. Substrate is bound by residues Ile-134–Gly-138, Asp-167, Gly-180, Asp-184, and Asn-272. Residue Asp-300 participates in Fe cation binding.

This sequence belongs to the KAE1 / TsaD family. It depends on Fe(2+) as a cofactor.

The protein localises to the cytoplasm. The enzyme catalyses L-threonylcarbamoyladenylate + adenosine(37) in tRNA = N(6)-L-threonylcarbamoyladenosine(37) in tRNA + AMP + H(+). Functionally, required for the formation of a threonylcarbamoyl group on adenosine at position 37 (t(6)A37) in tRNAs that read codons beginning with adenine. Is involved in the transfer of the threonylcarbamoyl moiety of threonylcarbamoyl-AMP (TC-AMP) to the N6 group of A37, together with TsaE and TsaB. TsaD likely plays a direct catalytic role in this reaction. The protein is tRNA N6-adenosine threonylcarbamoyltransferase of Dictyoglomus turgidum (strain DSM 6724 / Z-1310).